The chain runs to 447 residues: Tubulin alpha chain (447 aa).

Gln-11, Glu-71, Gly-144, Thr-145, Thr-179, Asn-206, and Asn-228 together coordinate GTP. Glu-71 is a binding site for Mg(2+). Residue Glu-254 is part of the active site.

The protein belongs to the tubulin family. Dimer of alpha and beta chains. A typical microtubule is a hollow water-filled tube with an outer diameter of 25 nm and an inner diameter of 15 nM. Alpha-beta heterodimers associate head-to-tail to form protofilaments running lengthwise along the microtubule wall with the beta-tubulin subunit facing the microtubule plus end conferring a structural polarity. Microtubules usually have 13 protofilaments but different protofilament numbers can be found in some organisms and specialized cells. It depends on Mg(2+) as a cofactor.

Its subcellular location is the cytoplasm. It is found in the cytoskeleton. The enzyme catalyses GTP + H2O = GDP + phosphate + H(+). Its function is as follows. Tubulin is the major constituent of microtubules, a cylinder consisting of laterally associated linear protofilaments composed of alpha- and beta-tubulin heterodimers. Microtubules grow by the addition of GTP-tubulin dimers to the microtubule end, where a stabilizing cap forms. Below the cap, tubulin dimers are in GDP-bound state, owing to GTPase activity of alpha-tubulin. This Avena sativa (Oat) protein is Tubulin alpha chain (TUBA).